A 463-amino-acid chain; its full sequence is Elongation factor 1-alpha (463 aa).

In terms of domain architecture, tr-type G spans 5–242 (KTHINIVVIG…DAILPPARPT (238 aa)). The segment at 14-21 (GHVDSGKS) is G1. 14–21 (GHVDSGKS) contacts GTP. Residues 70–74 (GITID) form a G2 region. The interval 91-94 (DAPG) is G3. GTP-binding positions include 91 to 95 (DAPGH) and 153 to 156 (NKMD). The interval 153-156 (NKMD) is G4. The interval 194–196 (SGW) is G5. 5-glutamyl glycerylphosphorylethanolamine occurs at positions 301 and 374.

Belongs to the TRAFAC class translation factor GTPase superfamily. Classic translation factor GTPase family. EF-Tu/EF-1A subfamily.

It is found in the cytoplasm. In terms of biological role, this protein promotes the GTP-dependent binding of aminoacyl-tRNA to the A-site of ribosomes during protein biosynthesis. The protein is Elongation factor 1-alpha of Bombyx mori (Silk moth).